A 344-amino-acid chain; its full sequence is Glyceraldehyde-3-phosphate dehydrogenase (344 aa).

Residues 11–12 (TI) and Gly-110 each bind NAD(+). 139–141 (SCN) is a D-glyceraldehyde 3-phosphate binding site. The Nucleophile role is filled by Cys-140. Arg-169 is an NAD(+) binding site. Residue 195–196 (HG) participates in D-glyceraldehyde 3-phosphate binding. Gln-302 lines the NAD(+) pocket.

It belongs to the glyceraldehyde-3-phosphate dehydrogenase family. As to quaternary structure, homotetramer.

Its subcellular location is the cytoplasm. It catalyses the reaction D-glyceraldehyde 3-phosphate + phosphate + NADP(+) = (2R)-3-phospho-glyceroyl phosphate + NADPH + H(+). The catalysed reaction is D-glyceraldehyde 3-phosphate + phosphate + NAD(+) = (2R)-3-phospho-glyceroyl phosphate + NADH + H(+). Its pathway is carbohydrate degradation; glycolysis; pyruvate from D-glyceraldehyde 3-phosphate: step 1/5. In Pyrobaculum calidifontis (strain DSM 21063 / JCM 11548 / VA1), this protein is Glyceraldehyde-3-phosphate dehydrogenase.